Here is a 1399-residue protein sequence, read N- to C-terminus: DNA-directed RNA polymerase subunit beta' (1399 aa).

Zn(2+) contacts are provided by C70, C72, C85, and C88. Mg(2+) contacts are provided by D460, D462, and D464. 4 residues coordinate Zn(2+): C814, C888, C895, and C898.

This sequence belongs to the RNA polymerase beta' chain family. The RNAP catalytic core consists of 2 alpha, 1 beta, 1 beta' and 1 omega subunit. When a sigma factor is associated with the core the holoenzyme is formed, which can initiate transcription. It depends on Mg(2+) as a cofactor. Requires Zn(2+) as cofactor.

It carries out the reaction RNA(n) + a ribonucleoside 5'-triphosphate = RNA(n+1) + diphosphate. In terms of biological role, DNA-dependent RNA polymerase catalyzes the transcription of DNA into RNA using the four ribonucleoside triphosphates as substrates. The polypeptide is DNA-directed RNA polymerase subunit beta' (Stutzerimonas stutzeri (strain A1501) (Pseudomonas stutzeri)).